We begin with the raw amino-acid sequence, 124 residues long: Photoactive yellow protein (124 aa).

The region spanning 22–85 is the PAS domain; the sequence is AEYLPFGAVL…GEFLRFHQTG (64 aa). Cys68 carries the S-(4-hydroxycinnamyl)cysteine modification.

This sequence belongs to the photoactive yellow protein family. In terms of processing, the 4-hydroxycinnamic acid (p-coumaric acid) chromophore is covalently bound via a thioester linkage.

Its function is as follows. This photoactive protein is a photoreceptor with kinetics similar to that of rhodopsin. This chain is Photoactive yellow protein (pyp), found in Cereibacter sphaeroides (strain ATCC 17023 / DSM 158 / JCM 6121 / CCUG 31486 / LMG 2827 / NBRC 12203 / NCIMB 8253 / ATH 2.4.1.) (Rhodobacter sphaeroides).